The primary structure comprises 209 residues: High frequency lysogenization protein HflD homolog (209 aa).

This sequence belongs to the HflD family.

The protein resides in the cytoplasm. Its subcellular location is the cell inner membrane. The protein is High frequency lysogenization protein HflD homolog of Marinomonas sp. (strain MWYL1).